The chain runs to 271 residues: Thiazole synthase (271 aa).

Residue Lys108 is the Schiff-base intermediate with DXP of the active site. 1-deoxy-D-xylulose 5-phosphate is bound by residues Gly169, 195-196 (AG), and 217-218 (NS).

Belongs to the ThiG family. As to quaternary structure, homotetramer. Forms heterodimers with either ThiH or ThiS.

It is found in the cytoplasm. It catalyses the reaction [ThiS sulfur-carrier protein]-C-terminal-Gly-aminoethanethioate + 2-iminoacetate + 1-deoxy-D-xylulose 5-phosphate = [ThiS sulfur-carrier protein]-C-terminal Gly-Gly + 2-[(2R,5Z)-2-carboxy-4-methylthiazol-5(2H)-ylidene]ethyl phosphate + 2 H2O + H(+). The protein operates within cofactor biosynthesis; thiamine diphosphate biosynthesis. In terms of biological role, catalyzes the rearrangement of 1-deoxy-D-xylulose 5-phosphate (DXP) to produce the thiazole phosphate moiety of thiamine. Sulfur is provided by the thiocarboxylate moiety of the carrier protein ThiS. In vitro, sulfur can be provided by H(2)S. This is Thiazole synthase from Prochlorococcus marinus (strain SARG / CCMP1375 / SS120).